A 108-amino-acid polypeptide reads, in one-letter code: MTETKNEIKLHVLFGALAVGFLMLALFSFSLQMLPVADLAKEFGIPGSVAAVVLNVVEAGGAVTTIVSILTAVGSGGLSLIAAAGKETIRQYLKNEIKKKGRKAVIAW.

Residues Met1–Asp38 constitute a propeptide that is removed on maturation. The segment at residues Leu39–Trp108 is a cross-link (cyclopeptide (Leu-Trp)).

The cross-link permits a high resistance to proteolysis. Is more resistant to specific proteases than to unspecific proteases.

It localises to the secreted. Cyclopeptide antibiotic that inhibits both Gram-positive and Gram-negative bacteria. Shows potent to weak activities against M.flavus (MIC=3 ug/ml), B.cereus (MIC=12 ug/ml), B.pumilus (MIC=12 ug/ml), E.coli (MIC=12 ug/ml), and S.pneumoniae (MIC=47 ug/ml). May act by forming pores. The polypeptide is Pumilarin (Bacillus safensis).